Here is a 245-residue protein sequence, read N- to C-terminus: Biosynthetic peptidoglycan transglycosylase (245 aa).

The chain crosses the membrane as a helical span at residues 20–42; that stretch reads VYAGSVFAGAWLATQLFYLAQIA.

This sequence belongs to the glycosyltransferase 51 family.

It is found in the cell inner membrane. It catalyses the reaction [GlcNAc-(1-&gt;4)-Mur2Ac(oyl-L-Ala-gamma-D-Glu-L-Lys-D-Ala-D-Ala)](n)-di-trans,octa-cis-undecaprenyl diphosphate + beta-D-GlcNAc-(1-&gt;4)-Mur2Ac(oyl-L-Ala-gamma-D-Glu-L-Lys-D-Ala-D-Ala)-di-trans,octa-cis-undecaprenyl diphosphate = [GlcNAc-(1-&gt;4)-Mur2Ac(oyl-L-Ala-gamma-D-Glu-L-Lys-D-Ala-D-Ala)](n+1)-di-trans,octa-cis-undecaprenyl diphosphate + di-trans,octa-cis-undecaprenyl diphosphate + H(+). The protein operates within cell wall biogenesis; peptidoglycan biosynthesis. Peptidoglycan polymerase that catalyzes glycan chain elongation from lipid-linked precursors. This chain is Biosynthetic peptidoglycan transglycosylase, found in Burkholderia cenocepacia (strain HI2424).